We begin with the raw amino-acid sequence, 369 residues long: Aminomethyltransferase (369 aa).

This sequence belongs to the GcvT family. As to quaternary structure, the glycine cleavage system is composed of four proteins: P, T, L and H.

It carries out the reaction N(6)-[(R)-S(8)-aminomethyldihydrolipoyl]-L-lysyl-[protein] + (6S)-5,6,7,8-tetrahydrofolate = N(6)-[(R)-dihydrolipoyl]-L-lysyl-[protein] + (6R)-5,10-methylene-5,6,7,8-tetrahydrofolate + NH4(+). In terms of biological role, the glycine cleavage system catalyzes the degradation of glycine. The chain is Aminomethyltransferase from Xanthomonas euvesicatoria pv. vesicatoria (strain 85-10) (Xanthomonas campestris pv. vesicatoria).